The following is a 540-amino-acid chain: Homoserine O-acetyltransferase (540 aa).

In terms of domain architecture, AB hydrolase-1 spans 66–404 (NVILICHALT…QHGHDAFLLE (339 aa)). The active-site Nucleophile is the Ser-171. Substrate is bound at residue Arg-240. The tract at residues 262-284 (QDTDKSGIKGTTGTEGKNSSEIS) is disordered. Active-site residues include Asp-365 and His-398. Asp-399 is a substrate binding site. 2 consecutive CBS domains span residues 425–484 (MNRN…ELDE) and 486–540 (ITRD…GKYD).

The protein belongs to the AB hydrolase superfamily. MetX family. As to quaternary structure, homodimer.

The protein resides in the cytoplasm. The catalysed reaction is L-homoserine + acetyl-CoA = O-acetyl-L-homoserine + CoA. It participates in amino-acid biosynthesis; L-methionine biosynthesis via de novo pathway; O-acetyl-L-homoserine from L-homoserine: step 1/1. Transfers an acetyl group from acetyl-CoA to L-homoserine, forming acetyl-L-homoserine. In vitro, can also use propionyl-CoA or butiryl-CoA as acyl donor. This is Homoserine O-acetyltransferase from Methanosarcina acetivorans (strain ATCC 35395 / DSM 2834 / JCM 12185 / C2A).